The sequence spans 127 residues: Phosphoribosyl-AMP cyclohydrolase (127 aa).

Position 78 (Asp-78) interacts with Mg(2+). Cys-79 provides a ligand contact to Zn(2+). Positions 80 and 82 each coordinate Mg(2+). Zn(2+)-binding residues include Cys-95 and Cys-102.

It belongs to the PRA-CH family. In terms of assembly, homodimer. Mg(2+) is required as a cofactor. Requires Zn(2+) as cofactor.

The protein localises to the cytoplasm. It carries out the reaction 1-(5-phospho-beta-D-ribosyl)-5'-AMP + H2O = 1-(5-phospho-beta-D-ribosyl)-5-[(5-phospho-beta-D-ribosylamino)methylideneamino]imidazole-4-carboxamide. It functions in the pathway amino-acid biosynthesis; L-histidine biosynthesis; L-histidine from 5-phospho-alpha-D-ribose 1-diphosphate: step 3/9. Its function is as follows. Catalyzes the hydrolysis of the adenine ring of phosphoribosyl-AMP. The chain is Phosphoribosyl-AMP cyclohydrolase from Salinibacter ruber (strain DSM 13855 / M31).